The sequence spans 259 residues: ATP synthase subunit b 3 (259 aa).

Residues 5 to 27 (WWTLGLQAINVLILIWILSRFLF) traverse the membrane as a helical segment.

It belongs to the ATPase B chain family. As to quaternary structure, F-type ATPases have 2 components, F(1) - the catalytic core - and F(0) - the membrane proton channel. F(1) has five subunits: alpha(3), beta(3), gamma(1), delta(1), epsilon(1). F(0) has three main subunits: a(1), b(2) and c(10-14). The alpha and beta chains form an alternating ring which encloses part of the gamma chain. F(1) is attached to F(0) by a central stalk formed by the gamma and epsilon chains, while a peripheral stalk is formed by the delta and b chains.

The protein localises to the cell inner membrane. Its function is as follows. F(1)F(0) ATP synthase produces ATP from ADP in the presence of a proton or sodium gradient. F-type ATPases consist of two structural domains, F(1) containing the extramembraneous catalytic core and F(0) containing the membrane proton channel, linked together by a central stalk and a peripheral stalk. During catalysis, ATP synthesis in the catalytic domain of F(1) is coupled via a rotary mechanism of the central stalk subunits to proton translocation. Component of the F(0) channel, it forms part of the peripheral stalk, linking F(1) to F(0). The protein is ATP synthase subunit b 3 of Beijerinckia indica subsp. indica (strain ATCC 9039 / DSM 1715 / NCIMB 8712).